A 156-amino-acid polypeptide reads, in one-letter code: MNINATLFAQIIVFFGLVWFTMKFVWPPIAKALDERAAKIAEGLAAAERGKSDFEQAEKKVAELLAEGRNQVSEMVANAEKRAAKIVEEAKEQASSEAARIAAQAKADVEQELFRARESLRDQVAVLAVKGAESILRSEVDASKHAKLLDTLKQEL.

Residues 7 to 27 (LFAQIIVFFGLVWFTMKFVWP) traverse the membrane as a helical segment.

Belongs to the ATPase B chain family. F-type ATPases have 2 components, F(1) - the catalytic core - and F(0) - the membrane proton channel. F(1) has five subunits: alpha(3), beta(3), gamma(1), delta(1), epsilon(1). F(0) has three main subunits: a(1), b(2) and c(10-14). The alpha and beta chains form an alternating ring which encloses part of the gamma chain. F(1) is attached to F(0) by a central stalk formed by the gamma and epsilon chains, while a peripheral stalk is formed by the delta and b chains.

Its subcellular location is the cell inner membrane. Functionally, f(1)F(0) ATP synthase produces ATP from ADP in the presence of a proton or sodium gradient. F-type ATPases consist of two structural domains, F(1) containing the extramembraneous catalytic core and F(0) containing the membrane proton channel, linked together by a central stalk and a peripheral stalk. During catalysis, ATP synthesis in the catalytic domain of F(1) is coupled via a rotary mechanism of the central stalk subunits to proton translocation. Component of the F(0) channel, it forms part of the peripheral stalk, linking F(1) to F(0). The sequence is that of ATP synthase subunit b from Neisseria gonorrhoeae (strain NCCP11945).